Reading from the N-terminus, the 89-residue chain is Small ribosomal subunit protein uS19 (89 aa).

The protein belongs to the universal ribosomal protein uS19 family.

Protein S19 forms a complex with S13 that binds strongly to the 16S ribosomal RNA. The protein is Small ribosomal subunit protein uS19 of Stenotrophomonas maltophilia (strain K279a).